We begin with the raw amino-acid sequence, 295 residues long: Zinc finger transcription factor pqm-1 (295 aa).

The segment at 1-23 (MSFLNNDFGSPPATSSPPTTMPK) is disordered. The segment covering 10-22 (SPPATSSPPTTMP) has biased composition (low complexity). A C2H2-type 1; degenerate zinc finger spans residues 161 to 183 (YMCTVCRKVYGRYNSVSYHVTIY). A C2H2-type 2 zinc finger spans residues 227 to 249 (RKCPHCRHVSKSPAMLEKHIRRH).

This sequence belongs to the krueppel C2H2-type zinc-finger protein family. In terms of assembly, interacts with ceh-60.

The protein resides in the chromosome. The protein localises to the nucleus. It localises to the cytoplasm. In terms of biological role, zinc finger transcription factor which acts as both a transcriptional activator and repressor. Binds to the promoters of genes that contain the 5'-CTTATCA-3' DNA consensus sequence in their regulatory region. Functions downstream of the Insulin/IGF-1-like signaling (IIS) mediated pathway. Involved in normal development, lifespan, stress response, lipid metabolism, innate immunity and exit from the developmentally arrested larval state known as dauer. Required for stress-induced expression of hsp-90 and resistance to heat stress, perhaps as part of a systemic stress signaling pathway. Involved in maintenance of proteostasis. Under hypoxic stress increases lipid levels by positively regulating fatty acid synthesis via fat-7 expression. Associates with homeobox protein ceh-60 at the promoters of some stress-responsive genes to regulate expression; may require phosphorylation for transcriptional repression activity. Acts downstream of nhr-14 to activate transcription of intestinal metal transporter smf-3, modulating innate immunity and iron uptake. May act downstream of the mTORC2 signaling mediated pathway. May act in a mutually exclusive manner with the FOXO transcription factor daf-16. This is Zinc finger transcription factor pqm-1 from Caenorhabditis elegans.